Consider the following 139-residue polypeptide: Large ribosomal subunit protein uL16c (139 aa).

The protein belongs to the universal ribosomal protein uL16 family. As to quaternary structure, part of the 50S ribosomal subunit.

It is found in the plastid. The protein resides in the chloroplast. The chain is Large ribosomal subunit protein uL16c from Cicer arietinum (Chickpea).